The primary structure comprises 351 residues: MISEDLLVEILLRLPVKPLARCLCVCKLWATIIRSRYFINLYQSRSSTRQPYVMFALRDIFTSCRWHFFSSSQPSLVTKATCSANNSSHTPDCVNGLICVEYMSQLWISNPATRKGVLVPQSAPHQKFRKWYMGYDPINYQYKVLFFSKQYLLSPYKLEVFTLEGQGSWKMIEVENIPSPSTRGICIDGVVYYGAQTAHGLRLVRFYVATEKFGDFIEIPVGASNVYDMNFGYSKLVNYQGKLALLAAKSMSMYDLWVLEDAGKQEWSKVSIVLTREMFSYDLVWLGAVGFVAGSDELIVTAHDRFYQIYLVYVDLKMKRSREVWLGGIRCSDRSSLVLTFTDYVESIMLL.

The region spanning 1–41 is the F-box domain; sequence MISEDLLVEILLRLPVKPLARCLCVCKLWATIIRSRYFINL.

In Arabidopsis thaliana (Mouse-ear cress), this protein is Putative F-box protein At5g52610.